Reading from the N-terminus, the 512-residue chain is Glutathione-binding protein GsiB (512 aa).

Positions 1–26 are cleaved as a signal peptide; that stretch reads MARAVHRSGLVALGIATALMASCAFA.

This sequence belongs to the bacterial solute-binding protein 5 family. The complex is composed of two ATP-binding proteins (GsiA), two transmembrane proteins (GsiC and GsiD) and a solute-binding protein (GsiB).

The protein resides in the periplasm. In terms of biological role, part of the ABC transporter complex GsiABCD involved in glutathione import. Binds glutathione. The chain is Glutathione-binding protein GsiB from Escherichia coli O157:H7.